The sequence spans 657 residues: Probable alpha-galactosidase D (657 aa).

The first 16 residues, 1-16 (MLPKIFYLSLLPAALG), serve as a signal peptide directing secretion. N-linked (GlcNAc...) asparagine glycosylation is found at N47 and N91. A disulfide bridge connects residues C124 and C157. The active-site Nucleophile is D155. N-linked (GlcNAc...) asparagine glycans are attached at residues N182 and N191. 200–204 (EWGID) contributes to the substrate binding site. D222 (proton donor) is an active-site residue. 7 N-linked (GlcNAc...) asparagine glycosylation sites follow: N291, N438, N460, N505, N539, N543, and N582.

It belongs to the glycosyl hydrolase 27 family.

It localises to the secreted. The catalysed reaction is Hydrolysis of terminal, non-reducing alpha-D-galactose residues in alpha-D-galactosides, including galactose oligosaccharides, galactomannans and galactolipids.. Functionally, hydrolyzes a variety of simple alpha-D-galactoside as well as more complex molecules such as oligosaccharides and polysaccharides. This is Probable alpha-galactosidase D (aglD) from Aspergillus oryzae (strain ATCC 42149 / RIB 40) (Yellow koji mold).